The following is a 238-amino-acid chain: Ribonuclease PH (238 aa).

Residues R86 and 124–126 (GTR) each bind phosphate.

This sequence belongs to the RNase PH family. In terms of assembly, homohexameric ring arranged as a trimer of dimers.

It catalyses the reaction tRNA(n+1) + phosphate = tRNA(n) + a ribonucleoside 5'-diphosphate. Functionally, phosphorolytic 3'-5' exoribonuclease that plays an important role in tRNA 3'-end maturation. Removes nucleotide residues following the 3'-CCA terminus of tRNAs; can also add nucleotides to the ends of RNA molecules by using nucleoside diphosphates as substrates, but this may not be physiologically important. Probably plays a role in initiation of 16S rRNA degradation (leading to ribosome degradation) during starvation. This is Ribonuclease PH from Geobacter metallireducens (strain ATCC 53774 / DSM 7210 / GS-15).